Consider the following 274-residue polypeptide: Undecaprenyl-diphosphatase (274 aa).

The next 7 helical transmembrane spans lie at 40 to 60, 90 to 110, 114 to 134, 147 to 167, 190 to 210, 221 to 241, and 252 to 272; these read PGAA…LMFF, WFII…KDVI, FRSL…LGVA, ISLR…IPGV, YAFL…LKDI, PTIV…AWLL, and FVLY…TGVI.

The protein belongs to the UppP family.

The protein resides in the cell membrane. The enzyme catalyses di-trans,octa-cis-undecaprenyl diphosphate + H2O = di-trans,octa-cis-undecaprenyl phosphate + phosphate + H(+). Functionally, catalyzes the dephosphorylation of undecaprenyl diphosphate (UPP). Confers resistance to bacitracin. This is Undecaprenyl-diphosphatase from Nocardioides sp. (strain ATCC BAA-499 / JS614).